We begin with the raw amino-acid sequence, 241 residues long: Lipoprotein MxiJ (241 aa).

Positions 1 to 17 (MIRYKGFILFLLLMLIG) are cleaved as a signal peptide. Cys-18 carries the N-palmitoyl cysteine lipid modification. Cys-18 is lipidated: S-diacylglycerol cysteine.

This sequence belongs to the YscJ lipoprotein family.

Its subcellular location is the cell outer membrane. In terms of biological role, involved in the secretion of the Ipa antigens. The protein is Lipoprotein MxiJ (mxiJ) of Shigella sonnei.